An 87-amino-acid chain; its full sequence is MAERGKRKFRTGIVVSDKSNKTRQVSVERTYRHSLYDRVLRSKSKFIVHDEKNISHVGDTVKIMESRPLSKMKRWVLVEVVNKTSEI.

Belongs to the universal ribosomal protein uS17 family. Part of the 30S ribosomal subunit.

Functionally, one of the primary rRNA binding proteins, it binds specifically to the 5'-end of 16S ribosomal RNA. This Endomicrobium trichonymphae protein is Small ribosomal subunit protein uS17.